A 194-amino-acid polypeptide reads, in one-letter code: Crossover junction endodeoxyribonuclease RuvC (194 aa).

Residues D8, E72, and D144 contribute to the active site. Positions 8, 72, and 144 each coordinate Mg(2+).

It belongs to the RuvC family. As to quaternary structure, homodimer which binds Holliday junction (HJ) DNA. The HJ becomes 2-fold symmetrical on binding to RuvC with unstacked arms; it has a different conformation from HJ DNA in complex with RuvA. In the full resolvosome a probable DNA-RuvA(4)-RuvB(12)-RuvC(2) complex forms which resolves the HJ. Requires Mg(2+) as cofactor.

Its subcellular location is the cytoplasm. It catalyses the reaction Endonucleolytic cleavage at a junction such as a reciprocal single-stranded crossover between two homologous DNA duplexes (Holliday junction).. Its function is as follows. The RuvA-RuvB-RuvC complex processes Holliday junction (HJ) DNA during genetic recombination and DNA repair. Endonuclease that resolves HJ intermediates. Cleaves cruciform DNA by making single-stranded nicks across the HJ at symmetrical positions within the homologous arms, yielding a 5'-phosphate and a 3'-hydroxyl group; requires a central core of homology in the junction. The consensus cleavage sequence is 5'-(A/T)TT(C/G)-3'. Cleavage occurs on the 3'-side of the TT dinucleotide at the point of strand exchange. HJ branch migration catalyzed by RuvA-RuvB allows RuvC to scan DNA until it finds its consensus sequence, where it cleaves and resolves the cruciform DNA. The chain is Crossover junction endodeoxyribonuclease RuvC from Psychrobacter sp. (strain PRwf-1).